Consider the following 368-residue polypeptide: 1-deoxy-D-xylulose 5-phosphate reductoisomerase (368 aa).

Positions 7, 8, 9, 10, 31, 32, 33, and 113 each coordinate NADPH. Residue lysine 114 coordinates 1-deoxy-D-xylulose 5-phosphate. Glutamate 115 is an NADPH binding site. A Mn(2+)-binding site is contributed by aspartate 133. Residues serine 134, glutamate 135, serine 158, and histidine 181 each coordinate 1-deoxy-D-xylulose 5-phosphate. Glutamate 135 serves as a coordination point for Mn(2+). Position 187 (glycine 187) interacts with NADPH. The 1-deoxy-D-xylulose 5-phosphate site is built by serine 194, asparagine 199, lysine 200, and glutamate 203. Glutamate 203 is a binding site for Mn(2+).

This sequence belongs to the DXR family. Requires Mg(2+) as cofactor. Mn(2+) serves as cofactor.

The enzyme catalyses 2-C-methyl-D-erythritol 4-phosphate + NADP(+) = 1-deoxy-D-xylulose 5-phosphate + NADPH + H(+). It participates in isoprenoid biosynthesis; isopentenyl diphosphate biosynthesis via DXP pathway; isopentenyl diphosphate from 1-deoxy-D-xylulose 5-phosphate: step 1/6. In terms of biological role, catalyzes the NADPH-dependent rearrangement and reduction of 1-deoxy-D-xylulose-5-phosphate (DXP) to 2-C-methyl-D-erythritol 4-phosphate (MEP). This is 1-deoxy-D-xylulose 5-phosphate reductoisomerase from Helicobacter pylori (strain HPAG1).